Here is a 223-residue protein sequence, read N- to C-terminus: MKTCAIIPVSRFTHAKTRLSPTLSPSEREGLLKAMLMDVSGALARHVDRVLVISADEDVLEYAYSLGLKILEEEGERDLNGALEQAMDFCAPEFDRVIITPSDIPLIGKADVSNLLDHASRADVVIAPANGGGTNTLILRPSAMSLRFGDCSFFEHIHEARERGLSVSVYDSFYLSLDVNTAEDLGEIILHGEGTHAREYLRKLRFTVKPSRGSDRLEVSRSP.

Belongs to the CofC family. As to quaternary structure, homodimer.

It catalyses the reaction (2S)-2-phospholactate + GTP + H(+) = (2S)-lactyl-2-diphospho-5'-guanosine + diphosphate. The protein operates within cofactor biosynthesis; coenzyme F420 biosynthesis. Functionally, guanylyltransferase that catalyzes the activation of (2S)-2-phospholactate (2-PL) as (2S)-lactyl-2-diphospho-5'-guanosine, via the condensation of 2-PL with GTP. It is involved in the biosynthesis of coenzyme F420, a hydride carrier cofactor. This chain is 2-phospho-L-lactate guanylyltransferase, found in Methanothermobacter thermautotrophicus (strain ATCC 29096 / DSM 1053 / JCM 10044 / NBRC 100330 / Delta H) (Methanobacterium thermoautotrophicum).